The sequence spans 386 residues: Cell division protein FtsZ (386 aa).

Residues 18-22 (GGGVN), 105-107 (GTG), glutamate 136, arginine 140, and aspartate 184 contribute to the GTP site.

Belongs to the FtsZ family. Homodimer. Polymerizes to form a dynamic ring structure in a strictly GTP-dependent manner. Interacts directly with several other division proteins.

Its subcellular location is the cytoplasm. Functionally, essential cell division protein that forms a contractile ring structure (Z ring) at the future cell division site. The regulation of the ring assembly controls the timing and the location of cell division. One of the functions of the FtsZ ring is to recruit other cell division proteins to the septum to produce a new cell wall between the dividing cells. Binds GTP and shows GTPase activity. This Mycobacterium kansasii protein is Cell division protein FtsZ.